A 132-amino-acid chain; its full sequence is Small ribosomal subunit protein uS15 (132 aa).

This sequence belongs to the universal ribosomal protein uS15 family. As to quaternary structure, part of the 30S ribosomal subunit.

This chain is Small ribosomal subunit protein uS15, found in Methanobrevibacter smithii (strain ATCC 35061 / DSM 861 / OCM 144 / PS).